The primary structure comprises 144 residues: Crossover junction endodeoxyribonuclease Hjc (144 aa).

E12 is a Mg(2+) binding site. Residue S32 is part of the active site. 2 residues coordinate Mg(2+): D42 and E55.

Belongs to the Holliday junction resolvase Hjc family. As to quaternary structure, homodimer; forms a 2:1 complex with Hel308 (Hjm). May form a complex with Holliday junction DNA, Hjc and Hjm. It depends on Mg(2+) as a cofactor.

It carries out the reaction Endonucleolytic cleavage at a junction such as a reciprocal single-stranded crossover between two homologous DNA duplexes (Holliday junction).. Cleavage stimulated by PCNA123 and PCNA323 and by RadC2. A structure-specific endonuclease that resolves Holliday junction (HJ) intermediates during genetic recombination. Cleaves 4-way DNA junctions introducing paired nicks in opposing strands, leaving a 5'-terminal phosphate and a 3'-terminal hydroxyl group that are subsequently ligated to produce recombinant products. Inhibits the helicase activity of Hel308 (Hjm). This Sulfurisphaera tokodaii (strain DSM 16993 / JCM 10545 / NBRC 100140 / 7) (Sulfolobus tokodaii) protein is Crossover junction endodeoxyribonuclease Hjc.